Reading from the N-terminus, the 148-residue chain is 18 kDa antigen (148 aa).

A sHSP domain is found at 21-131 (TSARPAVMPM…KPRKISVDRG (111 aa)).

This sequence belongs to the small heat shock protein (HSP20) family.

Its function is as follows. Not known. This protein is one of the major immune reactive proteins in mycobacteria. The polypeptide is 18 kDa antigen (hsp18) (Mycobacterium leprae (strain TN)).